The chain runs to 307 residues: Type 2A encapsulin shell protein (307 aa).

The protein belongs to the encapsulin family. Family 2A subfamily. In terms of assembly, homooligomeric. The encapsulin nanocompartment is formed by 60 subunits; monomers form pentamers which assemble to form shells. There are 12 charged pores where the pentamers meet as well as 3-fold axis channels and dimer channels. In terms of processing, the N-terminus is blocked.

Its subcellular location is the encapsulin nanocompartment. The protein resides in the cytoplasm. It is found in the cytosol. It localises to the cell membrane. In terms of biological role, shell component of a type 2A encapsulin nanocompartment. Forms encapsulin nanocompartments about 24 nm in diameter from 60 monomers. Probably encapsulates at least cysteine desulfurase (CyD, AC O32975) and allows passage of cysteine into its interior, probably involved in sulfur metabolism. Expression in M.smegmatis generates a multimeric protein, whereas expression in E.coli does not. This is Type 2A encapsulin shell protein from Mycobacterium leprae (strain TN).